Here is a 502-residue protein sequence, read N- to C-terminus: Lipoprotein LipO (502 aa).

Positions 1 to 21 are cleaved as a signal peptide; that stretch reads MKIRMRKKWMALPLAAMMIAG. Cys-22 carries the N-palmitoyl cysteine lipid modification. Cys-22 is lipidated: S-diacylglycerol cysteine.

Its subcellular location is the cell membrane. This is Lipoprotein LipO (lipO) from Bacillus subtilis (strain 168).